The primary structure comprises 86 residues: UPF0297 protein BBR47_19030 (86 aa).

It belongs to the UPF0297 family.

In Brevibacillus brevis (strain 47 / JCM 6285 / NBRC 100599), this protein is UPF0297 protein BBR47_19030.